The primary structure comprises 101 residues: Urease subunit beta (101 aa).

This sequence belongs to the urease beta subunit family. In terms of assembly, heterotrimer of UreA (gamma), UreB (beta) and UreC (alpha) subunits. Three heterotrimers associate to form the active enzyme.

It localises to the cytoplasm. It catalyses the reaction urea + 2 H2O + H(+) = hydrogencarbonate + 2 NH4(+). It functions in the pathway nitrogen metabolism; urea degradation; CO(2) and NH(3) from urea (urease route): step 1/1. In Burkholderia multivorans (strain ATCC 17616 / 249), this protein is Urease subunit beta.